Here is a 181-residue protein sequence, read N- to C-terminus: Crossover junction endodeoxyribonuclease RuvC (181 aa).

Catalysis depends on residues Asp7, Glu67, and Asp139. Mg(2+) contacts are provided by Asp7, Glu67, and Asp139.

The protein belongs to the RuvC family. Homodimer which binds Holliday junction (HJ) DNA. The HJ becomes 2-fold symmetrical on binding to RuvC with unstacked arms; it has a different conformation from HJ DNA in complex with RuvA. In the full resolvosome a probable DNA-RuvA(4)-RuvB(12)-RuvC(2) complex forms which resolves the HJ. Requires Mg(2+) as cofactor.

The protein resides in the cytoplasm. It carries out the reaction Endonucleolytic cleavage at a junction such as a reciprocal single-stranded crossover between two homologous DNA duplexes (Holliday junction).. Its function is as follows. The RuvA-RuvB-RuvC complex processes Holliday junction (HJ) DNA during genetic recombination and DNA repair. Endonuclease that resolves HJ intermediates. Cleaves cruciform DNA by making single-stranded nicks across the HJ at symmetrical positions within the homologous arms, yielding a 5'-phosphate and a 3'-hydroxyl group; requires a central core of homology in the junction. The consensus cleavage sequence is 5'-(A/T)TT(C/G)-3'. Cleavage occurs on the 3'-side of the TT dinucleotide at the point of strand exchange. HJ branch migration catalyzed by RuvA-RuvB allows RuvC to scan DNA until it finds its consensus sequence, where it cleaves and resolves the cruciform DNA. This chain is Crossover junction endodeoxyribonuclease RuvC, found in Bordetella avium (strain 197N).